Here is a 487-residue protein sequence, read N- to C-terminus: Probable Xaa-Pro aminopeptidase MGYG_06974 (487 aa).

The Mn(2+) site is built by D255, D266, E414, and E458.

The protein belongs to the peptidase M24B family. The cofactor is Mn(2+).

It carries out the reaction Release of any N-terminal amino acid, including proline, that is linked to proline, even from a dipeptide or tripeptide.. Catalyzes the removal of a penultimate prolyl residue from the N-termini of peptides. The chain is Probable Xaa-Pro aminopeptidase MGYG_06974 from Arthroderma gypseum (strain ATCC MYA-4604 / CBS 118893) (Microsporum gypseum).